The following is a 418-amino-acid chain: Serine hydroxymethyltransferase (418 aa).

(6S)-5,6,7,8-tetrahydrofolate is bound by residues leucine 120 and 124-126 (GHL). Lysine 229 is modified (N6-(pyridoxal phosphate)lysine). 353–355 (SPF) is a binding site for (6S)-5,6,7,8-tetrahydrofolate.

Belongs to the SHMT family. Homodimer. Pyridoxal 5'-phosphate is required as a cofactor.

It localises to the cytoplasm. It carries out the reaction (6R)-5,10-methylene-5,6,7,8-tetrahydrofolate + glycine + H2O = (6S)-5,6,7,8-tetrahydrofolate + L-serine. Its pathway is one-carbon metabolism; tetrahydrofolate interconversion. It participates in amino-acid biosynthesis; glycine biosynthesis; glycine from L-serine: step 1/1. Its function is as follows. Catalyzes the reversible interconversion of serine and glycine with tetrahydrofolate (THF) serving as the one-carbon carrier. This reaction serves as the major source of one-carbon groups required for the biosynthesis of purines, thymidylate, methionine, and other important biomolecules. Also exhibits THF-independent aldolase activity toward beta-hydroxyamino acids, producing glycine and aldehydes, via a retro-aldol mechanism. This is Serine hydroxymethyltransferase from Psychrobacter sp. (strain PRwf-1).